The chain runs to 215 residues: Probable phosphoglycerate mutase GpmB (215 aa).

Substrate-binding positions include 8-15, 21-22, Arg-58, Lys-60, 82-85, 104-105, and 151-152; these read RHGETQWN, QG, ELDM, RR, and GI. His-9 functions as the Tele-phosphohistidine intermediate in the catalytic mechanism. Glu-82 functions as the Proton donor/acceptor in the catalytic mechanism.

The protein belongs to the phosphoglycerate mutase family. GpmB subfamily.

It catalyses the reaction (2R)-2-phosphoglycerate = (2R)-3-phosphoglycerate. It functions in the pathway carbohydrate degradation; glycolysis; pyruvate from D-glyceraldehyde 3-phosphate: step 3/5. The protein is Probable phosphoglycerate mutase GpmB of Salmonella arizonae (strain ATCC BAA-731 / CDC346-86 / RSK2980).